Consider the following 79-residue polypeptide: Conotoxin ArMSGL-0123 (79 aa).

The N-terminal stretch at M1–S20 is a signal peptide. Residues H21–T44 constitute a propeptide that is removed on maturation. 3 disulfides stabilise this stretch: C52–C64, C56–C73, and C63–C77. L78 bears the Leucine amide mark.

The protein belongs to the conotoxin O3 superfamily. Expressed by the venom duct.

It is found in the secreted. This is Conotoxin ArMSGL-0123 from Conus arenatus (Sand-dusted cone).